A 638-amino-acid polypeptide reads, in one-letter code: ATP-dependent rRNA helicase spb4 (638 aa).

A Q motif motif is present at residues 14–42 (WDAVNPPLSEWVLDAVSSMGFTRMTPVQA). One can recognise a Helicase ATP-binding domain in the interval 45-249 (IPLFMAHKDV…RVGLRNPVKV (205 aa)). 58-65 (AVTGSGKT) is a binding site for ATP. Positions 197-200 (DEAD) match the DEAD box motif. One can recognise a Helicase C-terminal domain in the interval 283-437 (ALKHILNSVQ…PITVSDAEAA (155 aa)). The stretch at 521–629 (AYKDKQREKR…AKADKDAEEG (109 aa)) forms a coiled coil. The interval 538 to 638 (MAESGQQQTT…GGDEEFTGFD (101 aa)) is disordered. Residues 574–597 (MKQVRQERKRWEKMTEEEKKKALE) are compositionally biased toward basic and acidic residues. Over residues 625–638 (DAEEGGDEEFTGFD) the composition is skewed to acidic residues.

This sequence belongs to the DEAD box helicase family. DDX55/SPB4 subfamily. Component of pre-60S ribosomal complexes.

The protein localises to the nucleus. Its subcellular location is the nucleolus. The catalysed reaction is ATP + H2O = ADP + phosphate + H(+). Functionally, ATP-binding RNA helicase involved in the biogenesis of 60S ribosomal subunits. Binds 90S pre-ribosomal particles and dissociates from pre-60S ribosomal particles after processing of 27SB pre-rRNA. Required for the normal formation of 18S rRNA through the processing of pre-rRNAs at sites A0, A1 and A2, and the normal formation of 25S and 5.8S rRNAs through the processing of pre-rRNAs at sites C1 and C2. The sequence is that of ATP-dependent rRNA helicase spb4 from Emericella nidulans (strain FGSC A4 / ATCC 38163 / CBS 112.46 / NRRL 194 / M139) (Aspergillus nidulans).